Here is a 1214-residue protein sequence, read N- to C-terminus: Filamin-A-interacting protein 1 (1214 aa).

Polar residues predominate over residues 1-15; the sequence is MRSRNQGGESSSNGH. Positions 1-73 are disordered; sequence MRSRNQGGES…ESEKKTKKPL (73 aa). Basic and acidic residues-rich tracts occupy residues 32-47 and 61-73; these read PSED…KGED and PSGE…KKPL. Position 138 is a phosphoserine (Ser-138). Coiled-coil stretches lie at residues 192 to 581 and 624 to 778; these read DYMN…KLRS and PEDN…ELEL. Disordered regions lie at residues 875-898 and 949-976; these read KREN…GHPG and KPRI…GPER. Residue Ser-979 is modified to Phosphoserine. Residues 1104-1192 are disordered; it reads VSTGTVLRSP…TKFQPRAETQ (89 aa). Residues 1126-1140 are compositionally biased toward low complexity; it reads VTSTITITPVTTSST. Residues 1141 to 1157 show a composition bias toward polar residues; the sequence is RGTQSVSGQDGSSQRPT. Over residues 1169-1180 the composition is skewed to low complexity; the sequence is AGKPVVAAPGAG.

The protein belongs to the FILIP1 family. In terms of assembly, interacts with FLNA. Interacts with RHOD (in GTP-bound form).

Its subcellular location is the cytoplasm. It localises to the cytoskeleton. In terms of biological role, by acting through a filamin-A/F-actin axis, it controls the start of neocortical cell migration from the ventricular zone. May be able to induce the degradation of filamin-A. The polypeptide is Filamin-A-interacting protein 1 (Filip1) (Mus musculus (Mouse)).